The chain runs to 220 residues: UPF0319 protein Ent638_1476 (220 aa).

The signal sequence occupies residues 1–20 (MKTGIVSAVLALVMPVCVYA).

Belongs to the UPF0319 family.

The polypeptide is UPF0319 protein Ent638_1476 (Enterobacter sp. (strain 638)).